The chain runs to 285 residues: Cytochrome P450 monooxygenase eupD (285 aa).

The first 19 residues, 1–19 (MSIAGLVTTLPWLMNMLRA), serve as a signal peptide directing secretion. A heme-binding site is contributed by cysteine 229.

It belongs to the cytochrome P450 family. It depends on heme as a cofactor.

It participates in secondary metabolite biosynthesis; terpenoid biosynthesis. Its function is as follows. Cytochrome P450 monooxygenase; part of the gene cluster that mediates the biosynthesis of eupenifeldin, a bistropolone meroterpenoid that acts as an antitumor agent. The first step of eupenifeldin biosynthesis is the biosynthesis of 3-methylorcinaldehyde performed by the non-reducing polyketide synthase eupA. Oxidative dearomatization of 3-methylorcinaldehyde likely catalyzed by the FAD-dependent monooxygenase eupB is followed by oxidative ring expansion by the 2-oxoglutarate-dependent dioxygenase eupC to provide the first tropolone metabolite, tropolone stipitaldehyde. In parallel, generation of sesquiterpene alpha-humulene from farnesylpyrophosphate (FPP) is catalyzed by the terpene cyclase eupE. The cytochrome P450 monooxygenase eupD then hydroxylates humulene to humulenol. The putative Diels-Alderase eupF probably catalyzes the formation of the tropolone-humulene skeleton by linking humulenol and the polyketide moiety. The short-chain dehydrogenase/reductase eupG and the flavin-dependent monooxygenase eupH are also essential for eupenifeldin biosynthesis and are likely the additional decorating enzymes of the tropolone-humulene skeleton to produce final eupenifeldin or derivatives. This Phoma sp protein is Cytochrome P450 monooxygenase eupD.